A 228-amino-acid chain; its full sequence is Elongation factor 1-beta 1 (228 aa).

At Ala2 the chain carries N-acetylalanine. The region spanning 14 to 65 is the GST C-terminal domain; sequence LKTLEEHLAGKTYISGDQLSVDDVKVYAAVLENPGDGFPNASKWYDSVASHL. Residues 75–139 are disordered; the sequence is GVRVGGGVAP…DTKKTKESGK (65 aa). Acidic residues predominate over residues 95–115; the sequence is PAADGDGDDDDDIDLFADETE. Residues 116 to 138 are compositionally biased toward basic and acidic residues; that stretch reads DEKKAAEEREAAKKDTKKTKESG.

This sequence belongs to the EF-1-beta/EF-1-delta family. In terms of assembly, EF-1 is composed of 4 subunits: alpha, beta (1B-alpha=beta'), delta (1B-beta), and gamma (1B-gamma).

The protein localises to the cell membrane. Functionally, EF-1-beta and EF-1-delta stimulate the exchange of GDP bound to EF-1-alpha to GTP. The sequence is that of Elongation factor 1-beta 1 from Arabidopsis thaliana (Mouse-ear cress).